The chain runs to 368 residues: MSLFGTTSGFGTSGTSMFGSATTDNHNPMKDIEVTSSPDDSIGCLSFSPPTLPGNFLIAGSWANDVRCWEVQDSGQTIPKAQQMHTGPVLDVCWSDDGSKVFTASCDKTAKMWDLSSNQAIQIAQHDAPVKTIHWIKAPNYSCVMTGSWDKTLKFWDTRSSNPMMVLQLPERYYCADVIYPMAVVATAGRGLIVYQLENQPSEFRRIESPLKHQHRCVAIFKDKQNKPTGFALGSIEGRVAIHYINPPNPAKDNFTFKCHRSNGTNTSAPQDIYAVNGIAFHPVHGTLATVGSDGRFSFWDKDARTKLKTSEQLDQPISACCFNHNGNIFAYASSYDWSKGHEFYNPQKKNYIFLRNAAEELKPRNKK.

Residues 15–34 form a disordered region; it reads TSMFGSATTDNHNPMKDIEV. 7 WD repeats span residues 37–79, 84–114, 125–157, 168–206, 215–255, 271–301, and 310–346; these read SPDD…QTIP, MHTGPVLDVCWSDDGSKVFTASCDKTAKMWD, QHDAPVKTIHWIKAPNYSCVMTGSWDKTLKFWD, QLPERYYCADVIYPMAVVATAGRGLIVYQLENQPSEFRR, HRCV…KDNF, QDIYAVNGIAFHPVHGTLATVGSDGRFSFWD, and TSEQLDQPISACCFNHNGNIFAYASSYDWSKGHEFYN. Phosphothreonine is present on Thr229.

The protein belongs to the WD repeat rae1 family. In terms of assembly, interacts with NUMA1 (via N-terminal end of the coiled-coil domain); this interaction promotes spindle formation in mitosis. Interacts with NUP98. Interacts with MYCBP2. Interacts with USP11.

Its subcellular location is the cytoplasm. It is found in the nucleus. The protein localises to the cytoskeleton. The protein resides in the spindle pole. Functionally, plays a role in mitotic bipolar spindle formation. Binds mRNA. May function in nucleocytoplasmic transport and in directly or indirectly attaching cytoplasmic mRNPs to the cytoskeleton. The sequence is that of mRNA export factor (RAE1) from Macaca fascicularis (Crab-eating macaque).